The primary structure comprises 860 residues: MMIPSQSCFCFFFMVSFFLHTLASPTLRHCRHDQRNALLEFKHEFPRVNESNQIPYDVSLSSWNKSIDCCSWEGVTCDAISSEVISLNLSHVPLNNSLKPNSGLFKLQHLHNLTLSNCSLYGDIPSSLGNLFRLTLLDLSYNYLVGQVPPSIGNLSRLTILDLWDNKLVGQLPASIGNLTQLEYLIFSHNKFSGNIPVTFSNLTKLLVVNLYNNSFESMLPLDMSGFQNLDYFNVGENSFSGTLPKSLFTIPSLRWANLEGNMFKGPIEFRNMYSPSTRLQYLFLSQNKFDGPIPDTLSQYLNLIELDLSFNNLTGSFPTFLFTIPTLERVNLEGNHLKGPVEFGNMSSSSSLKFLNFAQNEFNGSIPESVSQYLNLEELHLSFNNFIGTIPRSISKLAKLEYFCLEDNNMVGEVPSWLWRLTMVALSNNSFNSFGESSEGLDETQVQWLDLSSNSFQGPFPHWICKLRSLEILIMSDNRFNGSIPPCLSSFMVSLTDLILRNNSLSGPLPDIFVNATKLLSLDVSRNKLDGVLPKSLIHCKAMQLLNVRSNKIKDKFPSWLGSLPSLHVLILRSNEFYGTLYQPHASIGFQSLRVIDVSHNDLIGTLPSFYFSSWREMSRLTGEDGDFRLSEAPYMGKVLNATAFFVDSMEIVNKGVETEFKRINEENKVINFSGNRFSGNIPESIGLLKELRHLNLSSNAFTGNIPQSLANLMKLEALDLSLNQLSGQIPQGLGSLSFMSTMNFSYNFLEGPVPKSTQFQGQNCSAFMENPKLNGLEEICRETDRVPNPKPQESKDLSEPEEHVINWIAAGIAYGPGVVCGLVIGHIFLSHKHECWFMEKFRRKKPKVVTRIARPSKH.

A signal peptide spans 1–23 (MMIPSQSCFCFFFMVSFFLHTLA). At 24–809 (SPTLRHCRHD…SEPEEHVINW (786 aa)) the chain is on the extracellular side. Residues Asn49, Asn64, Asn88, Asn95, Asn112, Asn117, Asn154, Asn178, Asn202, and Asn213 are each glycosylated (N-linked (GlcNAc...) asparagine). LRR repeat units follow at residues 108 to 131 (QHLHNLTLSNCSLYGDIPSSLGNL), 132 to 155 (FRLTLLDLSYNYLVGQVPPSIGNL), 156 to 179 (SRLTILDLWDNKLVGQLPASIGNL), 181 to 202 (QLEYLIFSHNKFSGNIPVTFSN), 203 to 226 (LTKLLVVNLYNNSFESMLPLDMSG), and 227 to 251 (FQNLDYFNVGENSFSGTLPKSLFTI). The stretch at 252-276 (PSLRWANLEGNMFKGPIEFRNMYSP) is one LRR 7; degenerate repeat. 14 LRR repeats span residues 277–301 (STRLQYLFLSQNKFDGPIPDTLSQY), 302–325 (LNLIELDLSFNNLTGSFPTFLFTI), 326–349 (PTLERVNLEGNHLKGPVEFGNMSS), 350–374 (SSSLKFLNFAQNEFNGSIPESVSQY), 376–398 (NLEELHLSFNNFIGTIPRSISKL), 400–419 (KLEYFCLEDNNMVGEVPSWL), 420–444 (WRLTMVALSNNSFNSFGESSEGLDE), 446–468 (QVQWLDLSSNSFQGPFPHWICKL), 469–494 (RSLEILIMSDNRFNGSIPPCLSSFMV), 496–517 (LTDLILRNNSLSGPLPDIFVNA), 518–541 (TKLLSLDVSRNKLDGVLPKSLIHC), 543–564 (AMQLLNVRSNKIKDKFPSWLGS), 565–591 (LPSLHVLILRSNEFYGTLYQPHASIGF), and 592–615 (QSLRVIDVSHNDLIGTLPSFYFSS). Asn313, Asn346, and Asn364 each carry an N-linked (GlcNAc...) asparagine glycan. Asn429 carries an N-linked (GlcNAc...) asparagine glycan. Asn482, Asn503, and Asn516 each carry an N-linked (GlcNAc...) asparagine glycan. 3 N-linked (GlcNAc...) asparagine glycosylation sites follow: Asn642, Asn673, and Asn697. LRR repeat units lie at residues 665–690 (INEENKVINFSGNRFSGNIPESIGLL), 691–714 (KELRHLNLSSNAFTGNIPQSLANL), 716–738 (KLEALDLSLNQLSGQIPQGLGSL), and 740–763 (FMSTMNFSYNFLEGPVPKSTQFQG). N-linked (GlcNAc...) asparagine glycosylation is found at Asn745 and Asn765. Residues 810 to 830 (IAAGIAYGPGVVCGLVIGHIF) traverse the membrane as a helical segment. Over 831–860 (LSHKHECWFMEKFRRKKPKVVTRIARPSKH) the chain is Cytoplasmic.

This sequence belongs to the RLP family.

Its subcellular location is the cell membrane. This Arabidopsis thaliana (Mouse-ear cress) protein is Receptor-like protein 31.